The primary structure comprises 709 residues: Acyl-coenzyme A oxidase 4 (709 aa).

Positions Met1–Gln12 are enriched in polar residues. The interval Met1–Trp29 is disordered.

This sequence belongs to the acyl-CoA oxidase family. As to quaternary structure, homooctamer. FAD serves as cofactor.

Its subcellular location is the peroxisome. The catalysed reaction is a 2,3-saturated acyl-CoA + O2 = a (2E)-enoyl-CoA + H2O2. Its pathway is lipid metabolism; peroxisomal fatty acid beta-oxidation. The chain is Acyl-coenzyme A oxidase 4 (POX4) from Candida tropicalis (Yeast).